Reading from the N-terminus, the 375-residue chain is Succinyl-diaminopimelate desuccinylase (375 aa).

His-66 contacts Zn(2+). Asp-68 is a catalytic residue. Asp-99 provides a ligand contact to Zn(2+). The active-site Proton acceptor is Glu-133. Zn(2+) contacts are provided by Glu-134, Glu-162, and His-348.

The protein belongs to the peptidase M20A family. DapE subfamily. In terms of assembly, homodimer. It depends on Zn(2+) as a cofactor. Co(2+) serves as cofactor.

It catalyses the reaction N-succinyl-(2S,6S)-2,6-diaminopimelate + H2O = (2S,6S)-2,6-diaminopimelate + succinate. The protein operates within amino-acid biosynthesis; L-lysine biosynthesis via DAP pathway; LL-2,6-diaminopimelate from (S)-tetrahydrodipicolinate (succinylase route): step 3/3. Catalyzes the hydrolysis of N-succinyl-L,L-diaminopimelic acid (SDAP), forming succinate and LL-2,6-diaminopimelate (DAP), an intermediate involved in the bacterial biosynthesis of lysine and meso-diaminopimelic acid, an essential component of bacterial cell walls. This Klebsiella pneumoniae (strain 342) protein is Succinyl-diaminopimelate desuccinylase.